A 311-amino-acid chain; its full sequence is HPr kinase/phosphorylase (311 aa).

Residues H140 and K161 contribute to the active site. 155 to 162 (GDSGIGKS) is an ATP binding site. S162 contacts Mg(2+). D179 serves as the catalytic Proton acceptor; for phosphorylation activity. Proton donor; for dephosphorylation activity. Residues 203 to 212 (IEIRGIGIID) form an important for the catalytic mechanism of both phosphorylation and dephosphorylation region. E204 contributes to the Mg(2+) binding site. Residue R245 is part of the active site. An important for the catalytic mechanism of dephosphorylation region spans residues 266–271 (PVKTGR).

This sequence belongs to the HPrK/P family. Homohexamer. Requires Mg(2+) as cofactor.

It catalyses the reaction [HPr protein]-L-serine + ATP = [HPr protein]-O-phospho-L-serine + ADP + H(+). The catalysed reaction is [HPr protein]-O-phospho-L-serine + phosphate + H(+) = [HPr protein]-L-serine + diphosphate. In terms of biological role, catalyzes the ATP- as well as the pyrophosphate-dependent phosphorylation of a specific serine residue in HPr, a phosphocarrier protein of the phosphoenolpyruvate-dependent sugar phosphotransferase system (PTS). HprK/P also catalyzes the pyrophosphate-producing, inorganic phosphate-dependent dephosphorylation (phosphorolysis) of seryl-phosphorylated HPr (P-Ser-HPr). The two antagonistic activities of HprK/P are regulated by several intracellular metabolites, which change their concentration in response to the absence or presence of rapidly metabolisable carbon sources (glucose, fructose, etc.) in the growth medium. Therefore, by controlling the phosphorylation state of HPr, HPrK/P is a sensor enzyme that plays a major role in the regulation of carbon metabolism and sugar transport: it mediates carbon catabolite repression (CCR), and regulates PTS-catalyzed carbohydrate uptake and inducer exclusion. This Enterococcus faecalis (strain ATCC 700802 / V583) protein is HPr kinase/phosphorylase (hprK).